The following is a 241-amino-acid chain: Uridylate kinase (241 aa).

9–10 is a binding site for ATP; that stretch reads GS. G44 is a binding site for UMP. Residues G45 and R49 each coordinate ATP. Residues D66 and 114 to 120 contribute to the UMP site; that span reads VTPGQTT. The ATP site is built by T140, Y146, and D149. The tract at residues 222–241 is disordered; it reads TDVIPTGSEEPIYWTGSSDA.

This sequence belongs to the UMP kinase family. As to quaternary structure, homohexamer.

The protein resides in the cytoplasm. The catalysed reaction is UMP + ATP = UDP + ADP. It functions in the pathway pyrimidine metabolism; CTP biosynthesis via de novo pathway; UDP from UMP (UMPK route): step 1/1. With respect to regulation, inhibited by UTP. Catalyzes the reversible phosphorylation of UMP to UDP. The polypeptide is Uridylate kinase (Halorubrum lacusprofundi (strain ATCC 49239 / DSM 5036 / JCM 8891 / ACAM 34)).